The primary structure comprises 197 residues: Recombination protein RecR (197 aa).

The segment at 56 to 71 adopts a C4-type zinc-finger fold; the sequence is CQRCHSFSDEAVCPLC. In terms of domain architecture, Toprim spans 79–174; the sequence is TLLCVVETAA…KVTRLAQGVP (96 aa).

This sequence belongs to the RecR family.

Its function is as follows. May play a role in DNA repair. It seems to be involved in an RecBC-independent recombinational process of DNA repair. It may act with RecF and RecO. This Psychrobacter cryohalolentis (strain ATCC BAA-1226 / DSM 17306 / VKM B-2378 / K5) protein is Recombination protein RecR.